We begin with the raw amino-acid sequence, 263 residues long: Leukocyte-associated immunoglobulin-like receptor 1 (263 aa).

Positions 1–21 are cleaved as a signal peptide; it reads MPLHSVIVLVLVLCLGWKSNT. One can recognise an Ig-like C2-type domain in the interval 27 to 112; it reads SDFTICAEPG…VWSQRSNDLQ (86 aa). Cysteines 49 and 96 form a disulfide. A glycan (N-linked (GlcNAc...) asparagine) is linked at N87. A helical membrane pass occupies residues 144–164; it reads ILTVVSVIFLLCLSLFLFCFL. 2 short sequence motifs (ITIM motif) span residues 225–230 and 255–260; these read VTYAQL and STYAAI. A phosphotyrosine mark is found at Y227 and Y257.

Interacts with SH2 domains of tyrosine-protein phosphatases PTPN6 and PTPN11. The interaction with PTPN6 is constitutive. Interacts with the SH2 domain of CSK. Binds with high affinity to extracellular matrix collagens, the interaction is functionally important. Phosphorylation at Tyr-227 and Tyr-257 activates it. May be phosphorylated by LCK. Post-translationally, N-glycosylated. In terms of tissue distribution, expressed in lymphoid and non-lymphoid organs.

It localises to the membrane. Functions as an inhibitory receptor that plays a constitutive negative regulatory role on cytolytic function of natural killer (NK) cells, B-cells and T-cells. Activation by Tyr phosphorylation results in recruitment and activation of the phosphatases PTPN6 and PTPN11. It also reduces the increase of intracellular calcium evoked by B-cell receptor ligation. May also play its inhibitory role independently of SH2-containing phosphatases. Modulates cytokine production in CD4+ T-cells, down-regulating IL2 and IFNG production while inducing secretion of transforming growth factor beta. Also down-regulates IgG and IgE production in B-cells as well as IL8, IL10 and TNF secretion. Inhibits proliferation and induces apoptosis in myeloid leukemia cell lines as well as prevents nuclear translocation of NF-kappa-B p65 subunit/RELA and phosphorylation of I-kappa-B alpha/CHUK in these cells. Inhibits the differentiation of peripheral blood precursors towards dendritic cells. The polypeptide is Leukocyte-associated immunoglobulin-like receptor 1 (Lair1) (Rattus norvegicus (Rat)).